The following is a 310-amino-acid chain: Protein-L-isoaspartate O-methyltransferase (310 aa).

Disordered regions lie at residues 1–44 (MSGE…DKPA) and 67–88 (AKPA…PAAP). A compositionally biased stretch (basic and acidic residues) spans 14-29 (EDLKRAPRKSEGRPGE). The segment covering 32–44 (AAGAVPKAADKPA) has biased composition (low complexity). The span at 75-86 (PTAPKPALPKPA) shows a compositional bias: pro residues. Ser157 is an active-site residue.

It belongs to the methyltransferase superfamily. L-isoaspartyl/D-aspartyl protein methyltransferase family.

The protein resides in the cytoplasm. It carries out the reaction [protein]-L-isoaspartate + S-adenosyl-L-methionine = [protein]-L-isoaspartate alpha-methyl ester + S-adenosyl-L-homocysteine. In terms of biological role, catalyzes the methyl esterification of L-isoaspartyl residues in peptides and proteins that result from spontaneous decomposition of normal L-aspartyl and L-asparaginyl residues. It plays a role in the repair and/or degradation of damaged proteins. In Burkholderia orbicola (strain MC0-3), this protein is Protein-L-isoaspartate O-methyltransferase.